Consider the following 300-residue polypeptide: Porphobilinogen deaminase (300 aa).

Cys-243 is subject to S-(dipyrrolylmethanemethyl)cysteine.

The protein belongs to the HMBS family. In terms of assembly, monomer. The cofactor is dipyrromethane.

It carries out the reaction 4 porphobilinogen + H2O = hydroxymethylbilane + 4 NH4(+). Its pathway is porphyrin-containing compound metabolism; protoporphyrin-IX biosynthesis; coproporphyrinogen-III from 5-aminolevulinate: step 2/4. Tetrapolymerization of the monopyrrole PBG into the hydroxymethylbilane pre-uroporphyrinogen in several discrete steps. This is Porphobilinogen deaminase from Clostridium novyi (strain NT).